The chain runs to 54 residues: Ovomucoid (54 aa).

The 51-residue stretch at 4–54 (VDCSDYPRPVCTLDYMPLCGSDNKTYSNKCNFCNAVVDSNGTITLSHFGRC) folds into the Kazal-like domain. 3 disulfides stabilise this stretch: cysteine 6–cysteine 36, cysteine 14–cysteine 33, and cysteine 22–cysteine 54. A glycan (N-linked (GlcNAc...) asparagine) is linked at asparagine 43.

The protein resides in the secreted. This is Ovomucoid from Corvus albus (Pied crow).